The sequence spans 317 residues: Ribosome production factor 2 homolog (317 aa).

The 213-residue stretch at 28–240 folds into the Brix domain; sequence KTAIFLRGNA…IRRVQPAESD (213 aa). The interval 287-317 is disordered; that stretch reads MKGLKRSVEEREDSENEEVEIEEDVISDASE. Phosphoserine occurs at positions 293, 300, 313, and 316. Over residues 296–317 the composition is skewed to acidic residues; the sequence is EREDSENEEVEIEEDVISDASE.

It belongs to the RPF2 family. In terms of assembly, component of a hexameric 5S RNP precursor complex, composed of 5S RNA, rrs1, rpf2, rpl5a/rpl5b, rpl11a/rpl11b and syo1; this complex acts as a precursor for ribosome assembly.

The protein localises to the nucleus. It is found in the nucleolus. The polypeptide is Ribosome production factor 2 homolog (Schizosaccharomyces pombe (strain 972 / ATCC 24843) (Fission yeast)).